The chain runs to 436 residues: Transcription termination factor Rho (436 aa).

The Rho RNA-BD domain maps to 65 to 140 (LVFVKGVLEI…IRMESVNGLP (76 aa)). Residues 185 to 190 (GKGQRG), 197 to 202 (KAGKTV), and Arg228 contribute to the ATP site.

Belongs to the Rho family. Homohexamer. The homohexamer assembles into an open ring structure.

Its function is as follows. Facilitates transcription termination by a mechanism that involves Rho binding to the nascent RNA, activation of Rho's RNA-dependent ATPase activity, and release of the mRNA from the DNA template. The protein is Transcription termination factor Rho of Aquifex aeolicus (strain VF5).